Here is a 587-residue protein sequence, read N- to C-terminus: MEVEKTEKNIAEDDESKIIYRGWKVMPFIIGNETFEKLGIVGSSSNLVIYLTTVFNMKSITAAKVVNIYGGTSNFGTIVAAFLCDSYFGRYKTLSFAMIACFLGSVAMDLTAVIHPLHPAQCAKEIGSVCNGPSIGQIMFLAGAMVLLVIGAGGIRPCNLPFGADQFDPKTKEGKRGIESFFNWYFFTFTFAQMVSLTLIVYVQSNVSWSIGLAIPAILMLLGCIIFFAGSKLYVKVKASGSPIHSITRVIVVAIKKRRLKPVGPNELYNYIASDFKNSKLGHTEQFRFLDKSAIQTQDDKLNKDGSPVDAWKLCSMQQVEEVKCVIRVLPVWLSAALFYLAYIQQTTYTIFQSLQSDRRLGPGSFQIPAGSYTVFLMLGMTIFIPIYDRVLVPFLRKYTGRDGGITQLQRVGAGLFLCITSMMVSAIVEQYRRKVALTKPTLGLAPRKGAISSMSGMWLIPQLVLMGIADALAGVGQMEFYYKQFPENMRSFAGSLYYCGIGLASYLSTFLLSAVHDTTEGFSGGSWLPEDLNKGRLEYFYFLVAGMMTLNLAYFLLVSHWYRYKDVVAKDKDMDKTSAEFDKVSV.

A run of 12 helical transmembrane segments spans residues 35–55 (FEKLGIVGSSSNLVIYLTTVF), 65–85 (VVNIYGGTSNFGTIVAAFLCD), 94–114 (LSFAMIACFLGSVAMDLTAVI), 135–155 (IGQIMFLAGAMVLLVIGAGGI), 181–201 (FFNWYFFTFTFAQMVSLTLIV), 209–229 (WSIGLAIPAILMLLGCIIFFA), 325–345 (CVIRVLPVWLSAALFYLAYIQ), 368–388 (IPAGSYTVFLMLGMTIFIPIY), 412–432 (VGAGLFLCITSMMVSAIVEQY), 457–477 (GMWLIPQLVLMGIADALAGVG), 493–513 (FAGSLYYCGIGLASYLSTFLL), and 540–560 (YFYFLVAGMMTLNLAYFLLVS).

This sequence belongs to the major facilitator superfamily. Proton-dependent oligopeptide transporter (POT/PTR) (TC 2.A.17) family. In terms of tissue distribution, expressed in roots, stems and major veins of the leaves. Detected in the companion cells of the root phloem.

Its subcellular location is the cell membrane. In terms of biological role, low-affinity nitrate transporter facilitating nitrate loading into root phloem. Not involved in dipeptides transport, but has a weak glucosinolate transport activity. The chain is Protein NRT1/ PTR FAMILY 2.9 (NPF2.9) from Arabidopsis thaliana (Mouse-ear cress).